The chain runs to 109 residues: Phosphoribosyl-ATP pyrophosphatase (109 aa).

This sequence belongs to the PRA-PH family.

Its subcellular location is the cytoplasm. It catalyses the reaction 1-(5-phospho-beta-D-ribosyl)-ATP + H2O = 1-(5-phospho-beta-D-ribosyl)-5'-AMP + diphosphate + H(+). It participates in amino-acid biosynthesis; L-histidine biosynthesis; L-histidine from 5-phospho-alpha-D-ribose 1-diphosphate: step 2/9. The polypeptide is Phosphoribosyl-ATP pyrophosphatase (Alkalilimnicola ehrlichii (strain ATCC BAA-1101 / DSM 17681 / MLHE-1)).